Reading from the N-terminus, the 224-residue chain is Oxalate oxidase GF-2.8 (224 aa).

An N-terminal signal peptide occupies residues 1–23; sequence MGYSKTLVAGLFAMLLLAPAVLA. A disulfide bridge connects residues Cys33 and Cys49. A Cupin type-1 domain is found at 63–214; the sequence is SKLAKAGNTS…ALRVEARVVE (152 aa). N-linked (GlcNAc...) asparagine glycans are attached at residues Asn70 and Asn75. Residues His111, His113, Glu118, and His160 each contribute to the Mn(2+) site.

This sequence belongs to the germin family. As to quaternary structure, oligomer (believed to be a pentamer but probably hexamer).

Its subcellular location is the secreted. The protein localises to the extracellular space. The protein resides in the apoplast. It is found in the cytoplasm. It localises to the cell wall. It catalyses the reaction oxalate + O2 + 2 H(+) = H2O2 + 2 CO2. Functionally, produces developmental and stress-related release of hydrogen peroxide in the apoplast. May play an important role in several aspects of plant growth and defense mechanisms. This chain is Oxalate oxidase GF-2.8, found in Triticum aestivum (Wheat).